Here is a 443-residue protein sequence, read N- to C-terminus: Probable D-serine dehydratase (443 aa).

N6-(pyridoxal phosphate)lysine is present on Lys118.

It belongs to the serine/threonine dehydratase family. DsdA subfamily. It depends on pyridoxal 5'-phosphate as a cofactor.

It catalyses the reaction D-serine = pyruvate + NH4(+). The polypeptide is Probable D-serine dehydratase (Aeromonas salmonicida (strain A449)).